The sequence spans 317 residues: Putative S-adenosyl-L-methionine-dependent methyltransferase MSMEG_0093 (317 aa).

S-adenosyl-L-methionine-binding positions include D134 and 163–164 (DL).

This sequence belongs to the UPF0677 family.

Its function is as follows. Exhibits S-adenosyl-L-methionine-dependent methyltransferase activity. The chain is Putative S-adenosyl-L-methionine-dependent methyltransferase MSMEG_0093 from Mycolicibacterium smegmatis (strain ATCC 700084 / mc(2)155) (Mycobacterium smegmatis).